The chain runs to 232 residues: Chalcone--flavanone isomerase (232 aa).

Substrate is bound by residues Thr-50 and Ser-192.

Belongs to the chalcone isomerase family.

It catalyses the reaction a chalcone = a flavanone.. It functions in the pathway secondary metabolite biosynthesis; flavonoid biosynthesis. Its function is as follows. Catalyzes the intramolecular cyclization of bicyclic chalcones into tricyclic (S)-flavanones. Responsible for the isomerization of 4,2',4',6'-tetrahydroxychalcone (also termed chalcone) into naringenin. This Saussurea medusa (Saw-wort) protein is Chalcone--flavanone isomerase (CHI).